The sequence spans 360 residues: 3-dehydroquinate synthase (360 aa).

NAD(+) contacts are provided by residues 105–109 (GVVGD), 129–130 (TT), K142, K151, and 169–172 (TLKT). The Zn(2+) site is built by E184, H247, and H263.

This sequence belongs to the sugar phosphate cyclases superfamily. Dehydroquinate synthase family. Co(2+) serves as cofactor. It depends on Zn(2+) as a cofactor. Requires NAD(+) as cofactor.

Its subcellular location is the cytoplasm. The catalysed reaction is 7-phospho-2-dehydro-3-deoxy-D-arabino-heptonate = 3-dehydroquinate + phosphate. The protein operates within metabolic intermediate biosynthesis; chorismate biosynthesis; chorismate from D-erythrose 4-phosphate and phosphoenolpyruvate: step 2/7. Its function is as follows. Catalyzes the conversion of 3-deoxy-D-arabino-heptulosonate 7-phosphate (DAHP) to dehydroquinate (DHQ). In Acetivibrio thermocellus (strain ATCC 27405 / DSM 1237 / JCM 9322 / NBRC 103400 / NCIMB 10682 / NRRL B-4536 / VPI 7372) (Clostridium thermocellum), this protein is 3-dehydroquinate synthase.